Here is a 510-residue protein sequence, read N- to C-terminus: MSAANVPLEATWQGHVASTLDAVVLFEACLSGNLRHVPRRPHDRERQDLIQSGQIFIYEEHASGIKRWTDGVTWSPSRILGNYLIYRELERPFPPGEKKRAAKKNKKQTNGGISKSEGCLRQNTGMNGTATGANAANLSSAGSMDPSEASRNPERALIGSLVDSYPFKEGGLVKKTISVQFRSVPHHLVSYYTVQDVMSGALATPTSHSGFLRNIVPRPELILNQNFRAPIDEVDVDDNRLIQHPLSSAHQEYVNHMHPPTFRTWSVPHVNMAVANPRQWPTSMVPAQQQQMPPPQHAQYLQTHPGAMAAPMPPPNYAQPSTHHPYAYQDGVMRPQVTTSSTLAPDVYRNMLVDQPLSRRHSTAYDLSNSSHAIGLTQTMSNNPVDPIRNMSHPFMQATPVYGNSGRLQEPVQHSDAFPSPRTLPQQEPGLDGSQQHSASLKLEGEESHLQHNNSWGTYDVAATHDVFLGGTNTDQSQPFLNPEGEEEQYDENNPPPTWPPGSNNSMGRL.

3 disordered regions span residues 94-152 (PPGE…ASRN), 393-438 (HPFM…QQHS), and 469-510 (LGGT…MGRL). A compositionally biased stretch (low complexity) spans 123–143 (NTGMNGTATGANAANLSSAGS). Composition is skewed to polar residues over residues 471–480 (GTNTDQSQPF) and 501–510 (PGSNNSMGRL).

This sequence belongs to the MIT1/WOR1 family.

The protein localises to the nucleus. In terms of biological role, global transcriptional regulator of pathogenicity. Differentially regulates expression of effector genes. Also required for radial growth and production of asexual conidiospores, and plays a role in mycelium pigmentation. Not required for induction of Ave1, the effector that activates resistance mediated by the Ve1 immune receptor in tomato. This Verticillium dahliae (strain VdLs.17 / ATCC MYA-4575 / FGSC 10137) (Verticillium wilt) protein is Global transcription regulator sge1.